A 634-amino-acid polypeptide reads, in one-letter code: MSTATNPLDLDVCAREPIHIPGLIQPYGVLLVIDPADGRIVQASTTAADLLGVPMAALLGMPYTQVLTLPEAQPFAVDDQPQHLMHAEVRFPQRATPPASAWVAAWHLYPQQWLVEMEPRDARLLDVTLREAMPLLRSVERDPGIAEAAVRVAKGLRSLIGFDRVMIYRFDEEWNGDIIAEARKPELEAYLGLHYPASDIPAQARALYLRNRVRQIADVGYQPSPIQPTVHPQLGTPVDLSDVSLRSVSPVHLEYLANMGVTATLVASIVVNDALWGLISCHHYSPHFTNHAMRDVTDAVARTLAGRIGALQAVARARLESVLLTVREKLITDFNDAEHMTVELLDDMAPDLMDVVDADGVAIFHGNDISRHGTTPDVAALRRIRDHIESEHHEALREDAVGALHVDAIGEVFPELADLAPLAAGFIFVPLMPQSRSALLWTRREQIQQIKWAGNPQLAKLEDIPNSRLSPRKSFDLWQQTVRGRARRWSPLHLESARSLRVLIELMERKRFQQDFTLLEASLSRLRDGVAIIERGTANAAHRLLFVNTAFADVCGSDVAELIGRELQTLYASDAPRANVELLQDALRNGRAAYVTLPLQVSDGAPVYRQFHLEPLPSPSGVTAHWLLQLRDPE.

Biliverdin IXalpha is bound at residue Cys-13. One can recognise a PAS 1 domain in the interval 13 to 118; sequence CAREPIHIPG…YPQQWLVEME (106 aa). The tract at residues 13 to 514 is photosensory core domain; that stretch reads CAREPIHIPG…ELMERKRFQQ (502 aa). The region spanning 151-305 is the GAF domain; it reads RVAKGLRSLI…VTDAVARTLA (155 aa). Positions 325–508 are phytochrome-specific (PHY); it reads TVREKLITDF…SLRVLIELME (184 aa). A tongue domain region spans residues 452 to 480; the sequence is WAGNPQLAKLEDIPNSRLSPRKSFDLWQQ. One can recognise a PAS 2 domain in the interval 515 to 590; sequence DFTLLEASLS…ELLQDALRNG (76 aa). A PAS9, output module, not required to bind biliverdin IX-alpha, required for dimerization region spans residues 515–634; the sequence is DFTLLEASLS…HWLLQLRDPE (120 aa).

In the N-terminal section; belongs to the phytochrome family. In terms of assembly, forms head-to-head homodimers. In terms of processing, contains one covalently linked biliverdin IX-alpha chromophore; present in the crystal structure as a mixture of Pr and Meta-R configurations.

Functionally, photoreceptor which exists in two forms that are reversibly interconvertible by light: far-red light (733 nm) converts protein to the red-absorbing (Pr) form, while red light (630 nm) partly converts the protein to the far-red-absorbing (Pfr) form. Regulates virulence of X.campestris pv. campestris on its host plants, perhaps by fine-tuning expression to ambient light levels and/or spatial cues. The Pr form may sense light and partially inhibit virulence; in the dark (Pfr form) biofilm and xanathan production rise and bacteria are more virulent. Strains overexpressing this protein have significantly decreased amounts of extracellular beta-1,4-endoglucanase, produce less xanthin and have decreased transcription of genes involved in virulence such as endoglucanases, type 2 secretion systems, xanthan production and flagellar-dependent motility. This Xanthomonas campestris pv. campestris (strain 8004) protein is Bacteriophytochrome (bphP).